Here is a 448-residue protein sequence, read N- to C-terminus: Putative F-box/LRR-repeat protein At5g25860 (448 aa).

The region spanning 11–58 (RDAVNCLPDEILAKILSYLPTKRAVSTSLISKRWRNLFALMIQLFESQ) is the F-box domain. LRR repeat units follow at residues 82–106 (QESFGDFVDKTLTDCNTIKKLSILC), 185–214 (FLHAIWFACERLCHSMLPGCPILEELFLHD), 215–240 (LRGYRYNDSPNFSISHKTLKRLTVHF), 310–341 (TLSLSPASVKMMYSRCVELHVFSNLVKLYFES), and 342–367 (NEKEGWEVLPRLLNKSPKLETLVLKG).

This is Putative F-box/LRR-repeat protein At5g25860 from Arabidopsis thaliana (Mouse-ear cress).